A 706-amino-acid polypeptide reads, in one-letter code: Melanopsin (706 aa).

At 1–86 (MTEIPSFQPP…VWDIPPLAHY (86 aa)) the chain is on the extracellular side. 3 N-linked (GlcNAc...) asparagine glycosylation sites follow: Asn12, Asn64, and Asn69. Residues 87-107 (IVGTAVFCIGCCGMFGNAVVV) form a helical membrane-spanning segment. The Cytoplasmic segment spans residues 108–121 (YSFIKSKGLRTPAN). Residues 122 to 142 (FFIINLALSDFLMNLTNMPIF) form a helical membrane-spanning segment. The Extracellular portion of the chain corresponds to 143-159 (AVNSAFQRWLLSDFACE). A disulfide bond links Cys158 and Cys236. Residues 160-180 (LYGFAGGLFGCLSINTLMAIS) form a helical membrane-spanning segment. At 181 to 201 (MDRYLVITKPFLVMRIVTKQR) the chain is on the cytoplasmic side. A helical membrane pass occupies residues 202–222 (VMFAILLLWIWSLVWALPPLF). Topologically, residues 223–248 (GWSAYVSEGFGTSCTFDYMTPKLSYH) are extracellular. A helical membrane pass occupies residues 249–269 (IFTYIIFFTMYFIPGGVMIYC). The Cytoplasmic segment spans residues 270–314 (YYNIFATVKSGDKQFGKAVKEMAHEDVKNKAQQERQRKNEIKTAK). Residues 315–335 (IAFIVISLFMSAWTPYAVVSA) form a helical membrane-spanning segment. At 336-351 (LGTLGYQDLVTPYLQS) the chain is on the extracellular side. A helical membrane pass occupies residues 352–372 (IPAMFAKSSAVYSPIVYAITY). Lys358 carries the N6-(retinylidene)lysine modification. Residues 373–706 (PKFREAVKKH…LSEAHDETVL (334 aa)) are Cytoplasmic-facing. Disordered regions lie at residues 393-446 (SEEE…RQDT), 571-599 (RTES…SFNT), and 630-658 (QSSE…NETE). Low complexity-rich tracts occupy residues 404–418 (QSSA…QTTA) and 426–442 (SVDS…SGVS). Basic and acidic residues predominate over residues 571-593 (RTESGYDRSQDSQRKKVVGDTHR). Positions 645–658 (GITEVDTDSENETE) are enriched in acidic residues.

It belongs to the G-protein coupled receptor 1 family. Opsin subfamily. Expressed in Joseph cells and photoreceptor cells of the dorsal ocelli.

It localises to the cell membrane. In terms of biological role, photoreceptor implicated in non-image-forming responses to light. Photoisomerizes covalently bound all-trans retinal back to 11-cis retinal. Most likely coupled to the G(q) signaling cascade. The chain is Melanopsin from Branchiostoma belcheri (Amphioxus).